A 143-amino-acid polypeptide reads, in one-letter code: uncharacterized protein (143 aa).

A disordered region spans residues 13 to 143 (SLQFPHHRPG…QDAAHQCRIQ (131 aa)). Over residues 17 to 31 (PHHRPGLRRHRKNTT) the composition is skewed to basic residues. Basic and acidic residues-rich tracts occupy residues 35 to 48 (AAVD…RGDA), 84 to 96 (DGRE…AEEK), and 112 to 133 (EKQH…DHAG). The segment covering 134-143 (QDAAHQCRIQ) has biased composition (low complexity).

This is an uncharacterized protein from Homo sapiens (Human).